Consider the following 401-residue polypeptide: Acetate kinase (401 aa).

Asn7 contacts Mg(2+). Residue Lys14 coordinates ATP. Arg92 is a binding site for substrate. The active-site Proton donor/acceptor is the Asp149. Residues 209 to 213, 283 to 285, and 331 to 335 each bind ATP; these read HLGNG, DAR, and GLGEN. Glu385 contributes to the Mg(2+) binding site.

The protein belongs to the acetokinase family. In terms of assembly, homodimer. Requires Mg(2+) as cofactor. The cofactor is Mn(2+).

Its subcellular location is the cytoplasm. The catalysed reaction is acetate + ATP = acetyl phosphate + ADP. It participates in metabolic intermediate biosynthesis; acetyl-CoA biosynthesis; acetyl-CoA from acetate: step 1/2. Its function is as follows. Catalyzes the formation of acetyl phosphate from acetate and ATP. Can also catalyze the reverse reaction. This Helicobacter pylori (strain Shi470) protein is Acetate kinase.